Reading from the N-terminus, the 142-residue chain is Transcription antitermination protein NusB (142 aa).

This sequence belongs to the NusB family.

In terms of biological role, involved in transcription antitermination. Required for transcription of ribosomal RNA (rRNA) genes. Binds specifically to the boxA antiterminator sequence of the ribosomal RNA (rrn) operons. The polypeptide is Transcription antitermination protein NusB (Streptococcus uberis (strain ATCC BAA-854 / 0140J)).